The chain runs to 201 residues: Holliday junction resolvase RecU (201 aa).

T85, D87, E100, and Q119 together coordinate Mg(2+).

Belongs to the RecU family. It depends on Mg(2+) as a cofactor.

It localises to the cytoplasm. It carries out the reaction Endonucleolytic cleavage at a junction such as a reciprocal single-stranded crossover between two homologous DNA duplexes (Holliday junction).. Endonuclease that resolves Holliday junction intermediates in genetic recombination. Cleaves mobile four-strand junctions by introducing symmetrical nicks in paired strands. Promotes annealing of linear ssDNA with homologous dsDNA. Required for DNA repair, homologous recombination and chromosome segregation. The protein is Holliday junction resolvase RecU of Geobacillus sp. (strain WCH70).